The sequence spans 341 residues: Phosphoribosylformylglycinamidine cyclo-ligase (341 aa).

The protein belongs to the AIR synthase family.

Its subcellular location is the cytoplasm. It carries out the reaction 2-formamido-N(1)-(5-O-phospho-beta-D-ribosyl)acetamidine + ATP = 5-amino-1-(5-phospho-beta-D-ribosyl)imidazole + ADP + phosphate + H(+). The protein operates within purine metabolism; IMP biosynthesis via de novo pathway; 5-amino-1-(5-phospho-D-ribosyl)imidazole from N(2)-formyl-N(1)-(5-phospho-D-ribosyl)glycinamide: step 2/2. The chain is Phosphoribosylformylglycinamidine cyclo-ligase from Caldicellulosiruptor bescii (strain ATCC BAA-1888 / DSM 6725 / KCTC 15123 / Z-1320) (Anaerocellum thermophilum).